Reading from the N-terminus, the 508-residue chain is Probable G-protein coupled receptor 101 (508 aa).

At 1-35 (MTSTCTNSTRESNSSHTCMPLSKMPISLAHGIIRS) the chain is on the extracellular side. N-linked (GlcNAc...) asparagine glycosylation is found at Asn7 and Asn13. A helical transmembrane segment spans residues 36–56 (TVLVIFLAASFVGNIVLALVL). Topologically, residues 57-68 (QRKPQLLQVTNR) are cytoplasmic. Residues 69-89 (FIFNLLVTDLLQISLVAPWVV) form a helical membrane-spanning segment. At 90-106 (ATSVPLFWPLNSHFCTA) the chain is on the extracellular side. A disulfide bond links Cys104 and Cys182. A helical transmembrane segment spans residues 107–127 (LVSLTHLFAFASVNTIVVVSV). Over 128–149 (DRYLSIIHPLSYPSKMTQRRGY) the chain is Cytoplasmic. A helical transmembrane segment spans residues 150–170 (LLLYGTWIVAILQSTPPLYGW). Residues 171–196 (GQAAFDERNALCSMIWGASPSYTILS) lie on the Extracellular side of the membrane. A helical membrane pass occupies residues 197-217 (VVSFIVIPLIVMIACYSVVFC). Over 218 to 399 (AARRQHALLY…PRCYQCKAAK (182 aa)) the chain is Cytoplasmic. A disordered region spans residues 244 to 338 (NEDEEGAEKK…ENSMKADKGR (95 aa)). Basic and acidic residues-rich tracts occupy residues 250–288 (AEKK…KAKE) and 318–338 (MEGK…DKGR). The helical transmembrane segment at 400–420 (VIFIIIFSYVLSLGPYCFLAV) threads the bilayer. Topologically, residues 421 to 433 (LAVWVDVETQVPQ) are extracellular. The helical transmembrane segment at 434-454 (WVITIIIWLFFLQCCIHPYVY) threads the bilayer. Residues 455–508 (GYMHKTIKKEIQDMLKKFFCKEKPPKEDSHPDLPGTEGGTEGKIVPSYDSATFP) are Cytoplasmic-facing. The segment covering 476–485 (EKPPKEDSHP) has biased composition (basic and acidic residues). The interval 476–508 (EKPPKEDSHPDLPGTEGGTEGKIVPSYDSATFP) is disordered.

Belongs to the G-protein coupled receptor 1 family.

It is found in the cell membrane. In terms of biological role, orphan receptor. The protein is Probable G-protein coupled receptor 101 (GPR101) of Homo sapiens (Human).